Consider the following 168-residue polypeptide: HTH-type transcriptional regulator IscR (168 aa).

The HTH rrf2-type domain maps to 2–131 (KLTSKGRYAV…NNITLGELMT (130 aa)). Positions 28 to 51 (LADISERQGISLSYLEQLFSKLRK) form a DNA-binding region, H-T-H motif. Residues Cys92, Cys98, and Cys104 each coordinate [2Fe-2S] cluster.

It depends on [2Fe-2S] cluster as a cofactor.

Regulates the transcription of several operons and genes involved in the biogenesis of Fe-S clusters and Fe-S-containing proteins. The sequence is that of HTH-type transcriptional regulator IscR from Vibrio parahaemolyticus serotype O3:K6 (strain RIMD 2210633).